Reading from the N-terminus, the 151-residue chain is UPF0178 protein CPS_3584 (151 aa).

It belongs to the UPF0178 family.

The polypeptide is UPF0178 protein CPS_3584 (Colwellia psychrerythraea (strain 34H / ATCC BAA-681) (Vibrio psychroerythus)).